The sequence spans 687 residues: Adhesion G-protein coupled receptor G1 (687 aa).

Residues 1–25 (MTAQSLLQTTLFLLSLLFLVQGAHG) form the signal peptide. 26–33 (RGHREDFR) contacts heparin. At 26–402 (RGHREDFRFC…VEVDAVHKHY (377 aa)) the chain is on the extracellular side. Disulfide bonds link C35-C91 and C121-C177. N-linked (GlcNAc...) asparagine glycosylation is found at N39, N148, N156, and N171. 190-200 (LKHPQKASRRP) contributes to the heparin binding site. One can recognise a GAIN-B domain in the interval 224–395 (DTVSFEEDRV…AVLMVSSVEV (172 aa)). 4 N-linked (GlcNAc...) asparagine glycosylation sites follow: N234, N303, N324, and N341. Intrachain disulfides connect C346-C377 and C366-C379. Residues 346–395 (CVFWVEDPTLSNPGRWSSAGCETVRRETQTSCFCNHLTYFAVLMVSSVEV) form a GPS region. Residues 384 to 397 (YFAVLMVSSVEVDA) are stachel. A helical membrane pass occupies residues 403–423 (LSLLSYVGCVVSALACVVTIA). Over 424 to 442 (AYLCSRRKPRDYTIKVHMN) the chain is Cytoplasmic. The chain crosses the membrane as a helical span at residues 443 to 463 (LLLAVFLLDVSFLLSEPVALT). Residues 464–470 (GSQSGCR) are Extracellular-facing. A helical membrane pass occupies residues 471–491 (ASAIFLHFSLLACLSWMGLEG). Over 492 to 512 (YNLYRLVVEVFGTYIPGYLLK) the chain is Cytoplasmic. Residues 513 to 533 (LSAMGWGFPIFLVTLVALVDV) traverse the membrane as a helical segment. The Extracellular segment spans residues 534-570 (DNYGPIILAVHRTPESVIYPSMCWIRDSLVSYITNLG). A helical transmembrane segment spans residues 571–591 (LFSLVFLFNMAMLGTMVVQIL). The Cytoplasmic segment spans residues 592 to 603 (RLRPHTQKWSHV). Residues 604 to 624 (LTLLGLSLVLGLPWALIFFSF) form a helical membrane-spanning segment. Over 625 to 630 (ASGTFQ) the chain is Extracellular. A helical membrane pass occupies residues 631-651 (LVVLYLFSIITSFQGFLIFLW). At 652 to 687 (YWSMRLQARGGPSPLKSNSDSARLPISTGSTSSSRI) the chain is on the cytoplasmic side. Residues 664–687 (SPLKSNSDSARLPISTGSTSSSRI) form a disordered region. Residues 666 to 687 (LKSNSDSARLPISTGSTSSSRI) show a composition bias toward polar residues.

It belongs to the G-protein coupled receptor 2 family. LN-TM7 subfamily. As to quaternary structure, heterodimer of 2 chains generated by proteolytic processing; the large extracellular N-terminal fragment (ADGRG1 NT) and the membrane-bound C-terminal fragment (ADGRG1-CT) predominantly remain associated and non-covalently linked. ADGRG1 NT self-associates in a trans-trans manner; the homophilic interaction enhances receptor signaling. Interacts with TGM2. Interacts with heparin; leading to the reduction of ADGRG1 shedding. Interacts with COL3A1. Part of a GPCR-tetraspanin complex at least consisting of ADGRG1, CD81, eventually CD9, and GNA11 in which CD81 is enhancing the association of ADGRG1 with GNA11. Autoproteolytically cleaved into 2 fragments; the large extracellular N-terminal fragment (ADGRG1 NT) and the membrane-bound C-terminal fragment (ADGRG1 CT) predominantly remain associated and non-covalently linked. Shedding to yield the secreted ADGRG1 N-terminal fragment seems to involve metalloprotease(s). Post-translationally, ubiquitinated. Undergoes polyubiquitination upon activation.

Its subcellular location is the cell membrane. The protein resides in the secreted. It localises to the membrane raft. Its activity is regulated as follows. Forms a heterodimer of 2 chains generated by proteolytic processing that remain associated through non-covalent interactions mediated by the GAIN-B domain. In the inactivated receptor, the Stachel sequence (also named stalk) is embedded in the GAIN-B domain, where it adopts a beta-strand conformation. On activation, the Stachel moves into the 7 transmembrane region and adopts a twisted hook-shaped configuration that forms contacts within the receptor, leading to coupling of a G-alpha protein, which activates signaling. The cleaved GAIN-B and N-terminal domains can then dissociate from the rest of the receptor. Adhesion G-protein coupled receptor (aGPCR) for steroid hormone 17alpha-hydroxypregnenolone (17-OH), which is involved in cell adhesion and cell-cell interactions. Ligand binding causes a conformation change that triggers signaling via guanine nucleotide-binding proteins (G proteins) and modulates the activity of downstream effectors, such as RhoA pathway. ADGRG1 is coupled to G(12) and/or G(13) G proteins (GNA12 and GNA13, respectively) and mediates the activation Rho small GTPases. Acts as a potent suppressor of ferroptosis: binding to 17-OH-binding initiates signaling that down-regulates CD36 and alleviates ferroptosis-induced liver injury. Ligand-binding also induces cell adhesion activity via association with proteins such as collagen III/COL3A1 and TGM2. Mediates cell matrix adhesion in developing neurons and hematopoietic stem cells. Involved in cortical development, specifically in maintenance of the pial basement membrane integrity and in cortical lamination: association with COL3A1 in the developing brain inhibits neuronal migration via activation of the RhoA pathway. Together with TGM2, acts as a regulator of myelination and myelin repair in oligodendrocyte precursor cells. Acts as a hemostatic sensor of shear force: G protein-coupled receptor signaling is activated in response to shear force in platelets, promoting G(13) G protein signaling, and platelet shape change and aggregation in a COL3A1-dependent manner. Acts as an inhibitor of VEGFA production thereby inhibiting angiogenesis through a signaling pathway mediated by PRKCA. Plays a role in the maintenance of hematopoietic stem cells in bone marrow niche. Plays an essential role in testis development. The protein is Adhesion G-protein coupled receptor G1 (ADGRG1) of Macaca mulatta (Rhesus macaque).